A 310-amino-acid chain; its full sequence is Olfactory receptor 5P54 (310 aa).

Over 1–25 (MNGGNHTSMTELFILGPTEDPTFCI) the chain is Extracellular. N-linked (GlcNAc...) asparagine glycosylation occurs at Asn5. A helical membrane pass occupies residues 26–46 (AFFVIFLGVYMVTLVGNISII). The Cytoplasmic segment spans residues 47–54 (TLIRISSQ). The chain crosses the membrane as a helical span at residues 55–75 (LHTPVYLFLNHLAFVDILYST). At 76–99 (LVSVIMLMELLEHELALPVAACAA) the chain is on the extracellular side. Cys97 and Cys189 are oxidised to a cystine. Residues 100-120 (ELCITVLFGSSECFLLAAMAY) form a helical membrane-spanning segment. Over 121-133 (DCYVAICSPLLYS) the chain is Cytoplasmic. The chain crosses the membrane as a helical span at residues 134–154 (TLMSSRVCFLLLGMSYVGGCM). Residues 155–196 (NGWIFTGCLLNLSFYGPYQIDHFFCDFSPLLKLSCSDVSIIG) lie on the Extracellular side of the membrane. Residue Asn165 is glycosylated (N-linked (GlcNAc...) asparagine). The chain crosses the membrane as a helical span at residues 197–217 (IIPSISSGSIIVVTVLVIAVF). The Cytoplasmic portion of the chain corresponds to 218–237 (YICILMTILKMHSTDGCHKA). Residues 238–258 (FSTCNSYLTAVTLYYGTITFI) form a helical membrane-spanning segment. The Extracellular segment spans residues 259-271 (YVMPKSNYSTEKN). N-linked (GlcNAc...) asparagine glycosylation occurs at Asn265. The chain crosses the membrane as a helical span at residues 272-292 (KVLSEFYTVVIPMLNHLIYSL). The Cytoplasmic segment spans residues 293-310 (KNRDVKDALRKAIVRVYT).

This sequence belongs to the G-protein coupled receptor 1 family.

It is found in the cell membrane. In terms of biological role, potential odorant receptor. This is Olfactory receptor 5P54 from Mus musculus (Mouse).